The sequence spans 410 residues: Beta-arrestin-2 (410 aa).

Residue Y48 is modified to Phosphotyrosine. 2 positions are modified to hydroxyproline; by PHD2: P176 and P181. The segment at 241-410 is interaction with TRAF6; it reads ADICLFSTAQ…KDDDCDDQFC (170 aa). S361 bears the Phosphoserine mark. Residues 364–410 form an interaction with AP2B1 region; it reads RETDVPVDTNLIEFDTNYATDDDIVFEDFARLRLKGMKDDDCDDQFC. Phosphothreonine is present on T383. A [DE]-X(1,2)-F-X-X-[FL]-X-X-X-R motif motif is present at residues 386 to 396; the sequence is DIVFEDFARLR.

Belongs to the arrestin family. In terms of assembly, homooligomer; the self-association is mediated by InsP6-binding. Heterooligomer with ARRB1; the association is mediated by InsP6-binding. Interacts with ADRB2 and CHRM2. Interacts with PDE4A. Interacts with PDE4D. Interacts with MAPK10, MAPK1 and MAPK3. Interacts with DRD2. Interacts with FSHR. Interacts with CLTC. Interacts with HTR2C. Interacts with CCR5. Interacts with CXCR4. Interacts with SRC. Interacts with DUSP16; the interaction is interrupted by stimulation of AGTR1 and activation of MAPK10. Interacts with CHUK; the interaction is enhanced stimulation of ADRB2. Interacts with RELA. Interacts with MDM2; the interaction is enhanced by activation of GPCRs. Interacts with SLC9A5. Interacts with TRAF6. Interacts with IGF1R. Interacts with ENG. Interacts with ARRB2. Interacts with KIR2DL1, KIR2DL3 and KIR2DL4. Interacts with LDLR. Interacts with AP2B1. Interacts with C5AR1. Interacts with RAF1. Interacts with MAP2K1. Interacts with MAPK1. Interacts with MAPK10; the interaction enhances MAPK10 activation by MAP3K5. Interacts with MAP2K4; the interaction is enhanced by presence of MAP3K5 and MAPK10. Interacts with MAP3K5. Interacts with AKT1. Interacts with IKBKB and MAP3K14. Interacts with SMO (activated). Interacts with GSK3A and GSK3B. Interacts with CXCR4; the interaction is dependent on C-terminal phosphorylation of CXCR4 and allows activation of MAPK1 and MAPK3. Interacts with GPR143. Interacts with HCK and CXCR1 (phosphorylated). Associates with protein phosphatase 2A (PP2A). Interacts with ACKR3 and ACKR4. Interacts with ARRDC1; the interaction is direct. Interacts with GPR61, GPR62 and GPR135. Interacts (via NACHT and LRR domains) with NLRP3; this interaction is direct and inducible by omega-3 polyunsaturated fatty acids (PUFAs). Interacts with FFAR4 (via C-terminus); this interaction is stimulated by long-chain fatty acids (LCFAs). Interacts with GPR35. Interacts with GPR84. Interacts with TIGIT; this interaction inhibits the NF-kappa-B pathway. Interacts with TGFBR3. In terms of processing, phosphorylated at Thr-383 in the cytoplasm; probably dephosphorylated at the plasma membrane. The phosphorylation does not regulate internalization and recycling of ADRB2, interaction with clathrin or AP2B1. The ubiquitination status appears to regulate the formation and trafficking of beta-arrestin-GPCR complexes and signaling. Ubiquitination appears to occur GPCR-specific. Ubiquitinated by MDM2; the ubiquitination is required for rapid internalization of ADRB2. Deubiquitinated by USP33; the deubiquitination leads to a dissociation of the beta-arrestin-GPCR complex. Stimulation of a class A GPCR, such as ADRB2, induces transient ubiquitination and subsequently promotes association with USP33. Stimulation of a class B GPCR promotes a sustained ubiquitination. Deubiquitinated by USP20; allowing USP20 to deubiquitinate TRAF6 leading to inhibition of NF-kappa-B signaling. Post-translationally, hydroxylation by PHD2 modulates the rate of internalization by slowing down recruitment to the plasma membrane and inhibiting subsequent co-internalization with class A receptors. Predominantly localized in neuronal tissues and in the spleen.

The protein resides in the cytoplasm. It is found in the nucleus. Its subcellular location is the cell membrane. The protein localises to the membrane. It localises to the clathrin-coated pit. The protein resides in the cytoplasmic vesicle. Functionally, functions in regulating agonist-mediated G-protein coupled receptor (GPCR) signaling by mediating both receptor desensitization and resensitization processes. During homologous desensitization, beta-arrestins bind to the GPRK-phosphorylated receptor and sterically preclude its coupling to the cognate G-protein; the binding appears to require additional receptor determinants exposed only in the active receptor conformation. The beta-arrestins target many receptors for internalization by acting as endocytic adapters (CLASPs, clathrin-associated sorting proteins) and recruiting the GPRCs to the adapter protein 2 complex 2 (AP-2) in clathrin-coated pits (CCPs). However, the extent of beta-arrestin involvement appears to vary significantly depending on the receptor, agonist and cell type. Internalized arrestin-receptor complexes traffic to intracellular endosomes, where they remain uncoupled from G-proteins. Two different modes of arrestin-mediated internalization occur. Class A receptors, like ADRB2, OPRM1, ENDRA, D1AR and ADRA1B dissociate from beta-arrestin at or near the plasma membrane and undergo rapid recycling. Class B receptors, like AVPR2, AGTR1, NTSR1, TRHR and TACR1 internalize as a complex with arrestin and traffic with it to endosomal vesicles, presumably as desensitized receptors, for extended periods of time. Receptor resensitization then requires that receptor-bound arrestin is removed so that the receptor can be dephosphorylated and returned to the plasma membrane. Mediates endocytosis of CCR7 following ligation of CCL19 but not CCL21. Involved in internalization of P2RY1, P2RY4, P2RY6 and P2RY11 and ATP-stimulated internalization of P2RY2. Involved in phosphorylation-dependent internalization of OPRD1 and subsequent recycling or degradation. Involved in ubiquitination of IGF1R. Beta-arrestins function as multivalent adapter proteins that can switch the GPCR from a G-protein signaling mode that transmits short-lived signals from the plasma membrane via small molecule second messengers and ion channels to a beta-arrestin signaling mode that transmits a distinct set of signals that are initiated as the receptor internalizes and transits the intracellular compartment. Acts as a signaling scaffold for MAPK pathways such as MAPK1/3 (ERK1/2) and MAPK10 (JNK3). ERK1/2 and JNK3 activated by the beta-arrestin scaffold are largely excluded from the nucleus and confined to cytoplasmic locations such as endocytic vesicles, also called beta-arrestin signalosomes. Acts as a signaling scaffold for the AKT1 pathway. GPCRs for which the beta-arrestin-mediated signaling relies on both ARRB1 and ARRB2 (codependent regulation) include ADRB2, F2RL1 and PTH1R. For some GPCRs the beta-arrestin-mediated signaling relies on either ARRB1 or ARRB2 and is inhibited by the other respective beta-arrestin form (reciprocal regulation). Increases ERK1/2 signaling in AGTR1- and AVPR2-mediated activation (reciprocal regulation). Involved in CCR7-mediated ERK1/2 signaling involving ligand CCL19. Is involved in type-1A angiotensin II receptor/AGTR1-mediated ERK activity. Is involved in type-1A angiotensin II receptor/AGTR1-mediated MAPK10 activity. Is involved in dopamine-stimulated AKT1 activity in the striatum by disrupting the association of AKT1 with its negative regulator PP2A. Involved in AGTR1-mediated chemotaxis. Appears to function as signaling scaffold involved in regulation of MIP-1-beta-stimulated CCR5-dependent chemotaxis. Involved in attenuation of NF-kappa-B-dependent transcription in response to GPCR or cytokine stimulation by interacting with and stabilizing CHUK. Suppresses UV-induced NF-kappa-B-dependent activation by interacting with CHUK. The function is promoted by stimulation of ADRB2 and dephosphorylation of ARRB2. Involved in IL8-mediated granule release in neutrophils. Involved in p53/TP53-mediated apoptosis by regulating MDM2 and reducing the MDM2-mediated degradation of p53/TP53. May serve as nuclear messenger for GPCRs. Upon stimulation of OR1D2, may be involved in regulation of gene expression during the early processes of fertilization. Also involved in regulation of receptors other than GPCRs. Involved in endocytosis of TGFBR2 and TGFBR3 and down-regulates TGF-beta signaling such as NF-kappa-B activation. Involved in endocytosis of low-density lipoprotein receptor/LDLR. Involved in endocytosis of smoothened homolog/Smo, which also requires GRK2. Involved in endocytosis of SLC9A5. Involved in endocytosis of ENG and subsequent TGF-beta-mediated ERK activation and migration of epithelial cells. Involved in Toll-like receptor and IL-1 receptor signaling through the interaction with TRAF6 which prevents TRAF6 autoubiquitination and oligomerization required for activation of NF-kappa-B and JUN. Involved in insulin resistance by acting as insulin-induced signaling scaffold for SRC, AKT1 and INSR. Involved in regulation of inhibitory signaling of natural killer cells by recruiting PTPN6 and PTPN11 to KIR2DL1. Involved in the internalization of the atypical chemokine receptor ACKR3. Acts as an adapter protein coupling FFAR4 receptor to specific downstream signaling pathways, as well as mediating receptor endocytosis. During the activation step of NLRP3 inflammasome, directly associates with NLRP3 leading to inhibition of pro-inflammatory cytokine release and inhibition of inflammation. This Mus musculus (Mouse) protein is Beta-arrestin-2 (Arrb2).